A 920-amino-acid polypeptide reads, in one-letter code: Disintegrin and metalloproteinase domain-containing protein 19 (920 aa).

Residues 1–26 (MPGRAGVARFCLLALALQLHWPLAAC) form the signal peptide. Residues 27–204 (EPGWTTRGSQ…TKKQPRRMKR (178 aa)) constitute a propeptide that is removed on maturation. Over 27 to 703 (EPGWTTRGSQ…VDSGPLPPKS (677 aa)) the chain is Extracellular. Positions 131 to 138 (STCRGIRG) match the Cysteine switch motif. A Zn(2+)-binding site is contributed by Cys133. N-linked (GlcNAc...) asparagine glycosylation is present at Asn145. The Peptidase M12B domain maps to 211–409 (KYVELYLVAD…GGGMCLSNMP (199 aa)). Cystine bridges form between Cys321–Cys404, Cys361–Cys388, and Cys362–Cys371. Position 346 (His346) interacts with Zn(2+). The active site involves Glu347. 2 residues coordinate Zn(2+): His350 and His356. The region spanning 417-503 (GRRCGNGYLE…HCPTNYYQMD (87 aa)) is the Disintegrin domain. N-linked (GlcNAc...) asparagine glycosylation is found at Asn445 and Asn448. A disulfide bridge links Cys475 with Cys495. Asn649 carries N-linked (GlcNAc...) asparagine glycosylation. An EGF-like domain is found at 654–686 (ETEGCGKKCNGHGVCNNNKNCHCFPGWSPPFCN). Disulfide bonds link Cys658–Cys668, Cys662–Cys674, and Cys676–Cys685. A helical transmembrane segment spans residues 704-724 (VGPVIAGVFSALFVLAVLVLL). The Cytoplasmic segment spans residues 725–920 (CHCYRQSHKL…RVGAIISSKI (196 aa)). Residues 755–920 (SQSGGTGHAN…RVGAIISSKI (166 aa)) are disordered. Over residues 767–783 (FKLQTPQGKRKVTNTPE) the composition is skewed to polar residues. Positions 825-834 (ARIERKESAR) are enriched in basic and acidic residues. The short motif at 835 to 846 (RPPPSRPMPPAP) is the SH3-binding element. Composition is skewed to pro residues over residues 835 to 846 (RPPPSRPMPPAP) and 888 to 903 (TSGP…PVPK).

As to quaternary structure, interacts with SH3PXD2A. The cofactor is Zn(2+). Post-translationally, the precursor is cleaved by a furin endopeptidase. As to expression, widely expressed, with the highest expression in bone, heart and lung, followed by brain and spleen and relatively low expression in liver, skeletal muscle, kidney and testis. In bone, primarily expressed in cell of the osteoblast lineage and not detected in mature osteoclasts.

It localises to the membrane. Participates in the proteolytic processing of beta-type neuregulin isoforms which are involved in neurogenesis and synaptogenesis, suggesting a regulatory role in glial cell. Also cleaves alpha-2 macroglobulin. May be involved in osteoblast differentiation and/or osteoblast activity in bone. This is Disintegrin and metalloproteinase domain-containing protein 19 (Adam19) from Mus musculus (Mouse).